We begin with the raw amino-acid sequence, 399 residues long: Probable peptidoglycan glycosyltransferase FtsW (399 aa).

The next 9 helical transmembrane spans lie at 33-53 (LVWL…STSI), 71-91 (IFYF…PIIF), 98-118 (IILI…HSIH), 160-180 (FWGF…LLAE), 182-202 (DLGT…LSGA), 204-224 (IGQF…LILL), 287-307 (IIGE…IFTI), 324-344 (IFSG…TSIN), and 359-379 (LPFI…IFFL).

Belongs to the SEDS family. FtsW subfamily.

It is found in the cell inner membrane. It carries out the reaction [GlcNAc-(1-&gt;4)-Mur2Ac(oyl-L-Ala-gamma-D-Glu-L-Lys-D-Ala-D-Ala)](n)-di-trans,octa-cis-undecaprenyl diphosphate + beta-D-GlcNAc-(1-&gt;4)-Mur2Ac(oyl-L-Ala-gamma-D-Glu-L-Lys-D-Ala-D-Ala)-di-trans,octa-cis-undecaprenyl diphosphate = [GlcNAc-(1-&gt;4)-Mur2Ac(oyl-L-Ala-gamma-D-Glu-L-Lys-D-Ala-D-Ala)](n+1)-di-trans,octa-cis-undecaprenyl diphosphate + di-trans,octa-cis-undecaprenyl diphosphate + H(+). It functions in the pathway cell wall biogenesis; peptidoglycan biosynthesis. Functionally, peptidoglycan polymerase that is essential for cell division. The sequence is that of Probable peptidoglycan glycosyltransferase FtsW from Buchnera aphidicola subsp. Acyrthosiphon pisum (strain APS) (Acyrthosiphon pisum symbiotic bacterium).